We begin with the raw amino-acid sequence, 481 residues long: UDP-N-acetylmuramoyl-L-alanyl-D-glutamate--L-lysine ligase (481 aa).

S42 serves as a coordination point for UDP-N-acetyl-alpha-D-muramoyl-L-alanyl-D-glutamate. 118–124 (GTKGKTT) is an ATP binding site. Residues 160–161 (TT), S187, and R195 contribute to the UDP-N-acetyl-alpha-D-muramoyl-L-alanyl-D-glutamate site. Residue K229 is modified to N6-carboxylysine. The L-lysine recognition motif signature appears at 404-407 (DDPN).

This sequence belongs to the MurCDEF family. MurE subfamily. In terms of processing, carboxylation is probably crucial for Mg(2+) binding and, consequently, for the gamma-phosphate positioning of ATP.

Its subcellular location is the cytoplasm. It carries out the reaction UDP-N-acetyl-alpha-D-muramoyl-L-alanyl-D-glutamate + L-lysine + ATP = UDP-N-acetyl-alpha-D-muramoyl-L-alanyl-gamma-D-glutamyl-L-lysine + ADP + phosphate + H(+). It functions in the pathway cell wall biogenesis; peptidoglycan biosynthesis. Catalyzes the addition of L-lysine to the nucleotide precursor UDP-N-acetylmuramoyl-L-alanyl-D-glutamate (UMAG) in the biosynthesis of bacterial cell-wall peptidoglycan. In Streptococcus sanguinis (strain SK36), this protein is UDP-N-acetylmuramoyl-L-alanyl-D-glutamate--L-lysine ligase.